The sequence spans 146 residues: Gonadotropin subunit beta-2 (146 aa).

Positions 1 to 28 (TGTPVKILVVRNILLLLFCLVVLLVFAQ) are cleaved as a signal peptide. Intrachain disulfides connect Cys35–Cys83, Cys49–Cys98, Cys52–Cys136, Cys60–Cys114, Cys64–Cys116, and Cys119–Cys126. Asn39 is a glycosylation site (N-linked (GlcNAc...) asparagine).

It belongs to the glycoprotein hormones subunit beta family. In terms of assembly, heterodimer of an alpha and a beta chain.

It is found in the secreted. In terms of biological role, involved in gametogenesis and steroidogenesis. The protein is Gonadotropin subunit beta-2 (cgbb) of Ctenopharyngodon idella (Grass carp).